A 499-amino-acid chain; its full sequence is Alpha-L-arabinofuranosidase B (499 aa).

The signal sequence occupies residues M1–A18. N-linked (GlcNAc...) asparagine glycosylation is found at N83 and N202.

This sequence belongs to the glycosyl hydrolase 54 family.

It catalyses the reaction Hydrolysis of terminal non-reducing alpha-L-arabinofuranoside residues in alpha-L-arabinosides.. The protein operates within glycan metabolism; L-arabinan degradation. Functionally, able to hydrolyze 1,5-, 1,3- and 1,2-alpha-linkages not only in L-arabinofuranosyl oligosaccharides, but also in polysac-charides containing terminal non-reducing L-arabinofuranoses in side chains, like L-arabinan, arabinogalactan and arabinoxylan. In Aspergillus niger, this protein is Alpha-L-arabinofuranosidase B (abfB).